Reading from the N-terminus, the 421-residue chain is Testin (421 aa).

In terms of domain architecture, PET spans 92-199 (MILTNPVAAK…GDVKLPREMD (108 aa)). Residues 133–164 (EKQPVAGSEGAQYRKKQLAKQLPAHDQDPSKC) are disordered. Residues 155–164 (PAHDQDPSKC) are compositionally biased toward basic and acidic residues. LIM zinc-binding domains follow at residues 234–297 (YSCY…CDSE), 299–359 (PRCA…NHAV), and 362–421 (QGCH…KMMS).

Belongs to the prickle / espinas / testin family. As to quaternary structure, interacts via LIM domain 1 with ZYX. Interacts (via LIM domain 3) with ENAH and VASP. Interacts with ALKBH4, talin, actin, alpha-actinin, GRIP1 and PXN. Interacts (via LIM domain 2) with ACTL7A (via N-terminus). Heterodimer with ACTL7A; the heterodimer interacts with ENAH to form a heterotrimer.

It localises to the cytoplasm. It is found in the cell junction. The protein resides in the focal adhesion. In terms of biological role, scaffold protein that may play a role in cell adhesion, cell spreading and in the reorganization of the actin cytoskeleton. Plays a role in the regulation of cell proliferation. May act as a tumor suppressor. This Mustela putorius furo (European domestic ferret) protein is Testin (TES).